The following is a 161-amino-acid chain: Dihydrofolate reductase (161 aa).

Residues 2 to 161 form the DHFR domain; sequence NISLIAAISK…YNYSFEILSR (160 aa). 6–8 contacts substrate; sequence IAA. Residues 7 to 8 and 15 to 20 contribute to the NADP(+) site; these read AA and IGYKNK. Asp28 is a substrate binding site. NADP(+) is bound at residue 44–47; sequence GRLT. Substrate is bound at residue Arg59. NADP(+) contacts are provided by residues 64–66 and 96–101; these read ISS and IGGAKI. Thr115 is a substrate binding site.

It belongs to the dihydrofolate reductase family.

The catalysed reaction is (6S)-5,6,7,8-tetrahydrofolate + NADP(+) = 7,8-dihydrofolate + NADPH + H(+). It functions in the pathway cofactor biosynthesis; tetrahydrofolate biosynthesis; 5,6,7,8-tetrahydrofolate from 7,8-dihydrofolate: step 1/1. Functionally, key enzyme in folate metabolism. Catalyzes an essential reaction for de novo glycine and purine synthesis, and for DNA precursor synthesis. The sequence is that of Dihydrofolate reductase (folA) from Buchnera aphidicola subsp. Acyrthosiphon pisum (strain APS) (Acyrthosiphon pisum symbiotic bacterium).